Here is a 327-residue protein sequence, read N- to C-terminus: Beta-ketoacyl-[acyl-carrier-protein] synthase III (327 aa).

Residues C112 and H253 contribute to the active site. An ACP-binding region spans residues 254–258 (QANER). N283 is a catalytic residue.

This sequence belongs to the thiolase-like superfamily. FabH family. Homodimer.

It is found in the cytoplasm. The enzyme catalyses malonyl-[ACP] + acetyl-CoA + H(+) = 3-oxobutanoyl-[ACP] + CO2 + CoA. It participates in lipid metabolism; fatty acid biosynthesis. Its function is as follows. Catalyzes the condensation reaction of fatty acid synthesis by the addition to an acyl acceptor of two carbons from malonyl-ACP. Catalyzes the first condensation reaction which initiates fatty acid synthesis and may therefore play a role in governing the total rate of fatty acid production. Possesses both acetoacetyl-ACP synthase and acetyl transacylase activities. Its substrate specificity determines the biosynthesis of branched-chain and/or straight-chain of fatty acids. The sequence is that of Beta-ketoacyl-[acyl-carrier-protein] synthase III from Chlamydia muridarum (strain MoPn / Nigg).